A 640-amino-acid polypeptide reads, in one-letter code: Epithelial sodium channel subunit beta (640 aa).

At 1–50 the chain is on the cytoplasmic side; that stretch reads MHVKKYLLKGLHRLQKGPGYTYKELLVWYCDNTNTHGPKRIICEGPKKKA. A helical transmembrane segment spans residues 51–71; it reads MWFLLTLLFAALVCWQWGIFI. Residues 72-532 are Extracellular-facing; sequence RTYLSWEVSV…GGQFGFWMGG (461 aa). Disulfide bonds link cysteine 98–cysteine 272, cysteine 184–cysteine 189, cysteine 196–cysteine 203, cysteine 249–cysteine 256, cysteine 361–cysteine 448, cysteine 386–cysteine 444, cysteine 390–cysteine 440, cysteine 399–cysteine 426, and cysteine 401–cysteine 415. N-linked (GlcNAc...) asparagine glycosylation occurs at asparagine 260. A helical membrane pass occupies residues 533–553; sequence SVLCLIEFGEIIIDFVWITII. At 554-640 the chain is on the cytoplasmic side; that stretch reads KLVALAKSLR…IESDSEGDAI (87 aa). The tract at residues 590–640 is disordered; the sequence is FQPDTAPRSPNTGPYPSEQALPIPGTPPPNYDSLRLQPLDVIESDSEGDAI. The PY motif; recruits WW domain-containing proteins and is thereby required for ubiquitination and inhibition of the channel by NEDD4 and NEDD4L motif lies at 616–620; it reads PPPNY. Positions 631–640 are enriched in acidic residues; sequence IESDSEGDAI. Residues serine 633 and serine 635 each carry the phosphoserine modification.

Belongs to the amiloride-sensitive sodium channel (TC 1.A.6) family. SCNN1B subfamily. Component of the heterotrimeric epithelial sodium channel (ENaC) composed of an alpha/SCNN1A, a beta/SCNN1B and a gamma/SCNN1G subunit. An additional delta/SCNN1D subunit can replace the alpha/SCNN1A subunit to form an alternative channel with specific properties. Interacts with WWP1 (via WW domains). Interacts with WWP2 (via WW domains); inhibits the channel. Interacts with the full-length immature form of PCSK9 (pro-PCSK9); inhibits ENaC by promoting its proteasomal degradation. Interacts (N-glycosylated) with BPIFA1; the interaction is direct and inhibits the proteolytic processing of SCNN1A and SCNN1G and the activation of ENaC. Ubiquitinated. Can be ubiquitinated at multiple sites and undergo monoubiquitination and polyubiquitination. Ubiquitination by NEDD4 or NEDD4L inhibits the ENaC channel through endocytosis, intracellular retention and degradation of its individual subunits. However, some studies could not confirm the ubiquitination of this subunit of the ENaC. Post-translationally, phosphorylated on serine and threonine residues. Aldosterone and insulin increase the basal level of phosphorylation. In terms of processing, N-glycosylated. N-glycosylation is required for interaction with BPIFA1. Detected in placenta, lung and kidney. Expressed in kidney (at protein level).

The protein resides in the apical cell membrane. Its subcellular location is the cytoplasmic vesicle membrane. It carries out the reaction Na(+)(in) = Na(+)(out). With respect to regulation, originally identified and characterized by its inhibition by the diuretic drug amiloride. This is one of the three pore-forming subunits of the heterotrimeric epithelial sodium channel (ENaC), a critical regulator of sodium balance and fluid homeostasis. ENaC operates in epithelial tissues, where it mediates the electrodiffusion of sodium ions from extracellular fluid through the apical membrane of cells, with water following osmotically. It plays a key role in maintaining sodium homeostasis through electrogenic sodium reabsorption in the kidneys. Additionally, ENaC is essential for airway surface liquid homeostasis, which is crucial for proper mucus clearance. This chain is Epithelial sodium channel subunit beta, found in Homo sapiens (Human).